Here is a 501-residue protein sequence, read N- to C-terminus: Ribose import ATP-binding protein RbsA (501 aa).

ABC transporter domains lie at 5-241 and 252-498; these read LSLE…VGRK and LRND…TGGV. 37-44 provides a ligand contact to ATP; sequence GENGAGKS.

Belongs to the ABC transporter superfamily. Ribose importer (TC 3.A.1.2.1) family. The complex is composed of an ATP-binding protein (RbsA), two transmembrane proteins (RbsC) and a solute-binding protein (RbsB).

Its subcellular location is the cell inner membrane. It catalyses the reaction D-ribose(out) + ATP + H2O = D-ribose(in) + ADP + phosphate + H(+). Its function is as follows. Part of the ABC transporter complex RbsABC involved in ribose import. Responsible for energy coupling to the transport system. This chain is Ribose import ATP-binding protein RbsA, found in Hahella chejuensis (strain KCTC 2396).